The primary structure comprises 448 residues: C4-dicarboxylate transport protein (448 aa).

The next 7 membrane-spanning stretches (helical) occupy residues 22–42, 55–75, 90–110, 137–157, 159–179, 199–219, and 232–252; these read FQVV…PAFA, LVKM…IAGM, TYFL…AHVV, ELSL…SAFV, GNIL…ALVG, LVHM…AFTI, and WLVG…LGIV. The interval 428 to 448 is disordered; the sequence is RAPPLQAPVPPPDAVAPVSAR. Positions 432-441 are enriched in pro residues; the sequence is LQAPVPPPDA.

Belongs to the dicarboxylate/amino acid:cation symporter (DAACS) (TC 2.A.23) family.

It is found in the cell inner membrane. Functionally, responsible for the transport of dicarboxylates such as succinate, fumarate, and malate from the periplasm across the membrane. The chain is C4-dicarboxylate transport protein from Xanthomonas campestris pv. campestris (strain 8004).